Reading from the N-terminus, the 408-residue chain is Putative transporter AmpG 2 (408 aa).

The next 11 helical transmembrane spans lie at 11-31, 49-69, 84-104, 110-130, 154-174, 177-197, 224-244, 261-281, 294-311, 353-373, and 382-402; these read IFNILFILIIAFPGGLIYLLT, IGLFGLVNFIHIFKFLWGPLL, YCLVITLINCIFCVYVLTSFN, IPFVLCLVVLAFFSSIYDMLI, FRIGILISGSGALYLSTIISW, VYRTMAILCIPSLLLIIFYPL, CIVIISFMLLYRLQDSFLSIM, VGYKAFGMCATIFGGVIGGFL, VLIYHALSSLSFIYLYFL, IALITSITNVGTILIGSISGY, and YFFIVAGLCFIPAYILILYLP.

This sequence belongs to the major facilitator superfamily.

It localises to the cell inner membrane. The sequence is that of Putative transporter AmpG 2 (ampG2) from Rickettsia prowazekii (strain Madrid E).